Consider the following 118-residue polypeptide: Large ribosomal subunit protein bL20 (118 aa).

Belongs to the bacterial ribosomal protein bL20 family.

Functionally, binds directly to 23S ribosomal RNA and is necessary for the in vitro assembly process of the 50S ribosomal subunit. It is not involved in the protein synthesizing functions of that subunit. This Hamiltonella defensa subsp. Acyrthosiphon pisum (strain 5AT) protein is Large ribosomal subunit protein bL20.